The primary structure comprises 53 residues: Lectin alpha chain (53 aa).

Belongs to the leguminous lectin family. As to quaternary structure, tetramer of two alpha and two beta chains.

The protein is Lectin alpha chain of Lathyrus clymenum (Spanish vetchling).